The following is a 431-amino-acid chain: Peroxisomal biogenesis factor 3 (431 aa).

The Peroxisomal portion of the chain corresponds to 1–10 (MDFFRRHQKK). The helical transmembrane segment at 11-28 (VLALVGVALSSYLFIDYV) threads the bilayer. Residues 29 to 431 (KKKFFEIQGR…VVYSSFDWAL (403 aa)) lie on the Cytoplasmic side of the membrane. The segment at 95–126 (TDRVLALESSTSSSATAQTVPTMTSGATEEGE) is disordered. The span at 112-121 (QTVPTMTSGA) shows a compositional bias: polar residues.

This sequence belongs to the peroxin-3 family.

It is found in the peroxisome membrane. Functionally, involved in peroxisome biosynthesis. Seems to directly or indirectly sequesters components of the peroxisome biogenesis machinery. The chain is Peroxisomal biogenesis factor 3 (PEX3) from Yarrowia lipolytica (strain CLIB 122 / E 150) (Yeast).